The sequence spans 873 residues: DNA mismatch repair protein MutS (873 aa).

625–632 (GPNMGGKS) contributes to the ATP binding site.

The protein belongs to the DNA mismatch repair MutS family.

This protein is involved in the repair of mismatches in DNA. It is possible that it carries out the mismatch recognition step. This protein has a weak ATPase activity. In Xanthomonas campestris pv. campestris (strain 8004), this protein is DNA mismatch repair protein MutS.